The chain runs to 276 residues: Hydroxyethylthiazole kinase (276 aa).

Substrate contacts are provided by Met-53 and Ala-202.

It belongs to the Thz kinase family. Requires Mg(2+) as cofactor.

The enzyme catalyses 5-(2-hydroxyethyl)-4-methylthiazole + ATP = 4-methyl-5-(2-phosphooxyethyl)-thiazole + ADP + H(+). The protein operates within cofactor biosynthesis; thiamine diphosphate biosynthesis; 4-methyl-5-(2-phosphoethyl)-thiazole from 5-(2-hydroxyethyl)-4-methylthiazole: step 1/1. Functionally, thiazole kinase involved in thiamine salvage pathway. The protein is Hydroxyethylthiazole kinase (THIM) of Arabidopsis thaliana (Mouse-ear cress).